The following is a 542-amino-acid chain: Cytochrome P450 734A6 (542 aa).

The helical transmembrane segment at 2–22 (GWWGWAAAAAAAAAWVAVKVL) threads the bilayer. Residue C474 participates in heme binding.

It belongs to the cytochrome P450 family. Requires heme as cofactor. In terms of tissue distribution, highly expressed in leaf sheaths. Expressed in roots, shoot apex, leaf blades, internodes and panicles.

The protein localises to the membrane. Its function is as follows. Cytochrome P450 involved in brassinosteroids (BRs) inactivation and regulation of BRs homeostasis. Is a multifunctional and multisubstrate enzyme that controls the endogenous bioactive BR content both by direct inactivation of castasterone (CS) and by decreasing the levels of BR precursors. Catalyzes the oxidation of carbon 22 hydroxylated BR intermediates to produce C26 oxidized metabolites. This chain is Cytochrome P450 734A6 (CYP734A6), found in Oryza sativa subsp. japonica (Rice).